The chain runs to 206 residues: Macrophage immunometabolism regulator (206 aa).

Residue methionine 1 is modified to N-acetylmethionine. Residues 1 to 41 (MEVDINGESRSTLTTLPFPGAEANSPGKAEAEKPRCSSTPC) are disordered. 3 positions are modified to phosphoserine: serine 25, serine 140, and serine 167.

It belongs to the UNC119-binding protein family. In terms of assembly, interacts with UNC119 and UNC119B; interaction preferentially takes place when UNC119 and UNC119B are unliganded with myristoylated proteins.

Its subcellular location is the cytoplasm. The protein localises to the cell projection. It is found in the cilium. Regulates the macrophage function, by enhancing the resolution of inflammation and wound repair functions mediated by M2 macrophages. The regulation of macrophage function is, due at least in part, to its ability to inhibit glycolysis. May also play a role in trafficking of proteins via its interaction with UNC119 and UNC119B cargo adapters: may help the release of UNC119 and UNC119B cargo or the recycling of UNC119 and UNC119B. May play a role in ciliary membrane localization via its interaction with UNC119B and protein transport into photoreceptor cells. The sequence is that of Macrophage immunometabolism regulator (MACIR) from Pongo abelii (Sumatran orangutan).